Here is a 796-residue protein sequence, read N- to C-terminus: MTKDKEPIVKSFHFVCLMIIIVGTRIQFSDGNEFAVDKSKRGLIHVPKDLPLKTKVLDMSQNYIAELQVSDMSFLSELTVLRLSHNRIQLLDLSVFKFNQDLEYLDLSHNQLQKISCHPIVSFRHLDLSFNDFKALPICKEFGNLSQLNFLGLSAMKLQKLDLLPIAHLHLSYILLDLRNYYIKENETESLQILNAKTLHLVFHPTSLFAIQVNISVNTLGCLQLTNIKLNDDNCQVFIKFLSELTRGSTLLNFTLNHIETTWKCLVRVFQFLWPKPVEYLNIYNLTIIESIREEDFTYSKTTLKALTIEHITNQVFLFSQTALYTVFSEMNIMMLTISDTPFIHMLCPHAPSTFKFLNFTQNVFTDSIFEKCSTLVKLETLILQKNGLKDLFKVGLMTKDMPSLEILDVSWNSLESGRHKENCTWVESIVVLNLSSNMLTDSVFRCLPPRIKVLDLHSNKIKSVPKQVVKLEALQELNVAFNSLTDLPGCGSFSSLSVLIIDHNSVSHPSADFFQSCQKMRSIKAGDNPFQCTCELREFVKNIDQVSSEVLEGWPDSYKCDYPESYRGSPLKDFHMSELSCNITLLIVTIGATMLVLAVTVTSLCIYLDLPWYLRMVCQWTQTRRRARNIPLEELQRNLQFHAFISYSEHDSAWVKSELVPYLEKEDIQICLHERNFVPGKSIVENIINCIEKSYKSIFVLSPNFVQSEWCHYELYFAHHNLFHEGSNNLILILLEPIPQNSIPNKYHKLKALMTQRTYLQWPKEKSKRGLFWANIRAAFNMKLTLVTENNDVKS.

The signal sequence occupies residues 1–31 (MTKDKEPIVKSFHFVCLMIIIVGTRIQFSDG). The Extracellular segment spans residues 32 to 586 (NEFAVDKSKR…MSELSCNITL (555 aa)). LRR repeat units lie at residues 54–77 (TKVLDMSQNYIAELQVSDMSFLSE), 78–101 (LTVLRLSHNRIQLLDLSVFKFNQD), 102–122 (LEYLDLSHNQLQKISCHPIVS), 123–147 (FRHLDLSFNDFKALPICKEFGNLSQ), 148–168 (LNFLGLSAMKLQKLDLLPIAH), 169–196 (LHLSYILLDLRNYYIKENETESLQILNA), 197–219 (KTLHLVFHPTSLFAIQVNISVNT), 220–250 (LGCLQLTNIKLNDDNCQVFIKFLSELTRGST), 251–277 (LLNFTLNHIETTWKCLVRVFQFLWPKP), 278–303 (VEYLNIYNLTIIESIREEDFTYSKTT), 304–330 (LKALTIEHITNQVFLFSQTALYTVFSE), 331–354 (MNIMMLTISDTPFIHMLCPHAPST), 355–378 (FKFLNFTQNVFTDSIFEKCSTLVK), 379–404 (LETLILQKNGLKDLFKVGLMTKDMPS), 405–429 (LEILDVSWNSLESGRHKENCTWVES), 430–450 (IVVLNLSSNMLTDSVFRCLPP), 451–474 (RIKVLDLHSNKIKSVPKQVVKLEA), 475–496 (LQELNVAFNSLTDLPGCGSFSS), and 497–520 (LSVLIIDHNSVSHPSADFFQSCQK). C117 and C139 are oxidised to a cystine. N-linked (GlcNAc...) asparagine glycosylation occurs at N144. N-linked (GlcNAc...) asparagine glycosylation is found at N186 and N214. Cysteines 235 and 265 form a disulfide. N253 and N285 each carry an N-linked (GlcNAc...) asparagine glycan. A disulfide bridge connects residues C348 and C373. N-linked (GlcNAc...) asparagine glycosylation occurs at N359. N-linked (GlcNAc...) asparagine glycans are attached at residues N423 and N434. A disulfide bridge connects residues C424 and C447. The 55-residue stretch at 521 to 575 (MRSIKAGDNPFQCTCELREFVKNIDQVSSEVLEGWPDSYKCDYPESYRGSPLKDF) folds into the LRRCT domain. A glycan (N-linked (GlcNAc...) asparagine) is linked at N583. Residues 587–607 (LIVTIGATMLVLAVTVTSLCI) traverse the membrane as a helical segment. Over 608–796 (YLDLPWYLRM…LVTENNDVKS (189 aa)) the chain is Cytoplasmic. A TIR domain is found at 640 to 781 (LQFHAFISYS…LFWANIRAAF (142 aa)).

Belongs to the Toll-like receptor family. As to quaternary structure, homodimer (via cytoplasmic TIR domain). Heterodimer with TLR2 via their respective extracellular domains. Binds MYD88 via their respective TIR domains. Interacts with CD36, following CD36 stimulation by oxLDL or amyloid-beta 42, and forms a heterodimer with TLR4. The trimeric complex is internalized and triggers inflammatory response. LYN kinase activity facilitates TLR4:TLR6 heterodimerization and signal initiation. The heterodimer TLR2:TLR6 interacts with CD14 and CD36 in response to triacylated lipopeptides. As to expression, detected in monocytes, CD11c+ immature dendritic cells, plasmacytoid pre-dendritic cells and dermal microvessel endothelial cells.

The protein localises to the cell membrane. It is found in the cytoplasmic vesicle. Its subcellular location is the phagosome membrane. It localises to the membrane raft. The protein resides in the golgi apparatus. In terms of biological role, participates in the innate immune response to Gram-positive bacteria and fungi. Specifically recognizes diacylated and, to a lesser extent, triacylated lipopeptides. In response to diacylated lipopeptides, forms the activation cluster TLR2:TLR6:CD14:CD36, this cluster triggers signaling from the cell surface and subsequently is targeted to the Golgi in a lipid-raft dependent pathway. Acts via MYD88 and TRAF6, leading to NF-kappa-B activation, cytokine secretion and the inflammatory response. Recognizes mycoplasmal macrophage-activating lipopeptide-2kD (MALP-2), soluble tuberculosis factor (STF), phenol-soluble modulin (PSM) and B.burgdorferi outer surface protein A lipoprotein (OspA-L) cooperatively with TLR2. In complex with TLR4, promotes sterile inflammation in monocytes/macrophages in response to oxidized low-density lipoprotein (oxLDL) or amyloid-beta 42. In this context, the initial signal is provided by oxLDL- or amyloid-beta 42-binding to CD36. This event induces the formation of a heterodimer of TLR4 and TLR6, which is rapidly internalized and triggers inflammatory response, leading to the NF-kappa-B-dependent production of CXCL1, CXCL2 and CCL9 cytokines, via MYD88 signaling pathway, and CCL5 cytokine, via TICAM1 signaling pathway, as well as IL1B secretion. This chain is Toll-like receptor 6 (TLR6), found in Homo sapiens (Human).